The sequence spans 209 residues: uncharacterized protein (209 aa).

A run of 3 helical transmembrane segments spans residues 26-48, 147-169, and 179-196; these read LRYF…GLAV, AYLV…PFLM, and IVAA…VYLL.

It localises to the cell membrane. This is an uncharacterized protein from Archaeoglobus fulgidus (strain ATCC 49558 / DSM 4304 / JCM 9628 / NBRC 100126 / VC-16).